We begin with the raw amino-acid sequence, 1190 residues long: Wings apart-like protein homolog (1190 aa).

Disordered stretches follow at residues 1–23 (MTSRFGKTYSRKGGNGSSKFDEV) and 46–82 (QKRPNFKPDIQEIPKKPKVEEESTGDPFGFDSDDESL). The segment at 1-659 (MTSRFGKTYS…ENQEFTDDIE (659 aa)) is mediates interaction with the cohesin complex. The span at 54–66 (DIQEIPKKPKVEE) shows a compositional bias: basic and acidic residues. Positions 73–75 (FGF) match the FGF motif 1 motif. Ser77 is subject to Phosphoserine. Position 168 is an N6-acetyllysine (Lys168). Residues Ser221, Ser223, and Ser226 each carry the phosphoserine modification. Residues 260 to 286 (LLEMKDDDFKNRLENLNEAIEEDIVQS) are a coiled coil. Ser347 and Ser380 each carry phosphoserine. Positions 429-431 (FGF) match the FGF motif 2 motif. Position 443 is a phosphoserine (Ser443). The FGF motif 3 signature appears at 453 to 455 (FGF). Residues Ser459 and Ser461 each carry the phosphoserine modification. Residues 459–469 (SESEDDEDDDC) show a composition bias toward acidic residues. Positions 459-553 (SESEDDEDDD…SGPKRSPTKA (95 aa)) are disordered. The segment covering 494–509 (SNDNSQDSQSGTNNAE) has biased composition (polar residues). The span at 531-540 (QGDKSKENTR) shows a compositional bias: basic and acidic residues. Positions 626 to 1169 (RREDKELYTV…KKFLSFMNLT (544 aa)) constitute a WAPL domain. Residues 749-782 (ELEQDASSAKLLNEKDMNKIKEKIRRLCETVHNK) are a coiled coil. A Phosphoserine modification is found at Ser904.

Belongs to the WAPL family. In terms of assembly, interacts with the cohesin complex throughout the cell cycle; interacts with both chromatin-bound and soluble pools of the complex. Interacts with RAD21; the interaction is direct. Interacts with PDS5A; the interaction is direct, cohesin-dependent and competitive with CDCA5/SORORIN. Interacts (via FGF motifs) with PDS5B; the interaction is direct. Interacts with a SMC1 protein (SMC1A or SMC1B) and SMC3. As to quaternary structure, (Microbial infection) Isoform 2 interacts with Epstein-Barr virus EBNA2. Post-translationally, deubiquitinated by USP37; leading to stabilization. As to expression, isoform 1 is highly expressed in uterine cervix tumor. Isoform 2 is widely expressed with a high level in skeletal muscle and heart.

It localises to the nucleus. Its subcellular location is the chromosome. The protein localises to the cytoplasm. Regulator of sister chromatid cohesion in mitosis which negatively regulates cohesin association with chromatin. Involved in both sister chromatid cohesion during interphase and sister-chromatid resolution during early stages of mitosis. Couples DNA replication to sister chromatid cohesion. Cohesion ensures that chromosome partitioning is accurate in both meiotic and mitotic cells and plays an important role in DNA repair. The protein is Wings apart-like protein homolog of Homo sapiens (Human).